Reading from the N-terminus, the 260-residue chain is tRNA pseudouridine synthase A (260 aa).

Aspartate 52 (nucleophile) is an active-site residue. Tyrosine 110 contributes to the substrate binding site.

The protein belongs to the tRNA pseudouridine synthase TruA family. In terms of assembly, homodimer.

It catalyses the reaction uridine(38/39/40) in tRNA = pseudouridine(38/39/40) in tRNA. Its function is as follows. Formation of pseudouridine at positions 38, 39 and 40 in the anticodon stem and loop of transfer RNAs. The sequence is that of tRNA pseudouridine synthase A from Spiroplasma kunkelii.